A 166-amino-acid chain; its full sequence is Large ribosomal subunit protein uL10 (166 aa).

It belongs to the universal ribosomal protein uL10 family. Part of the ribosomal stalk of the 50S ribosomal subunit. The N-terminus interacts with L11 and the large rRNA to form the base of the stalk. The C-terminus forms an elongated spine to which L12 dimers bind in a sequential fashion forming a multimeric L10(L12)X complex.

In terms of biological role, forms part of the ribosomal stalk, playing a central role in the interaction of the ribosome with GTP-bound translation factors. In Tropheryma whipplei (strain TW08/27) (Whipple's bacillus), this protein is Large ribosomal subunit protein uL10.